The primary structure comprises 432 residues: Interleukin-11 receptor subunit alpha-2 (432 aa).

The signal sequence occupies residues 1–23 (MSSSCSGLTRVLVAVATALVSSS). At 24 to 372 (SPCPQAWGPP…DPLEQVAVLA (349 aa)) the chain is on the extracellular side. The Ig-like C2-type domain maps to 27-110 (PQAWGPPGVQ…SGGMVTLKLG (84 aa)). Cystine bridges form between C48–C94, C120–C130, and C170–C180. Fibronectin type-III domains lie at 112-219 (PPAR…LRPD) and 220-317 (PPQG…TPST). N127 carries N-linked (GlcNAc...) asparagine glycosylation. Residues 151–170 (KTLPGAESQRESPSTGPWPC) are disordered. N194 is a glycosylation site (N-linked (GlcNAc...) asparagine). The WSXWS motif motif lies at 304–308 (WSAWS). Residues 373–393 (SLGIFSCLGLAVGALALGLWL) form a helical membrane-spanning segment. Residues 394–432 (RLRRSGKEGPQKPGLLAPMIPVEKLPGIPNLQRTPENFS) are Cytoplasmic-facing.

This sequence belongs to the type I cytokine receptor family. Type 3 subfamily. As to quaternary structure, on ligand binding, forms a multimer complex with IL6ST/gp130. Expression restricted to testis, lymph node and thymus. Highest level in testis.

Its subcellular location is the membrane. Its function is as follows. Receptor for interleukin-11. The receptor systems for IL6, LIF, OSM, CNTF, IL11 and CT1 can utilize IL6ST for initiating signal transmission. The IL11/IL11RA/IL6ST complex may be involved in the control of proliferation and/or differentiation of skeletogenic progenitor or other mesenchymal cells. The chain is Interleukin-11 receptor subunit alpha-2 (Il11ra2) from Mus musculus (Mouse).